Here is a 759-residue protein sequence, read N- to C-terminus: Serine/threonine-protein kinase HRK1 (759 aa).

The tract at residues 1 to 32 (MPNLLSRNPFHGHHNDHHHDRENSSNNPPQLI) is disordered. Serine 37 is subject to Phosphoserine. The segment at 45-162 (KQSNDSLRSE…PPPSKSTSTV (118 aa)) is disordered. The segment covering 59–97 (SMKSTTTTTNYTTTNLNNNTHSHSNATSISTNNYNNNYE) has biased composition (low complexity). Residues 113-122 (SPASPKQTHS) show a composition bias toward polar residues. The region spanning 215–722 (GKLGKLLGSG…LDDIFNDEWF (508 aa)) is the Protein kinase domain. Residues 221–229 (LGSGAGGSV) and lysine 244 each bind ATP. The active-site Proton acceptor is aspartate 340. 2 positions are modified to phosphoserine: serine 382 and serine 472. Polar residues predominate over residues 493–502 (PNTPASIQGK). Disordered stretches follow at residues 493-578 (PNTP…GRVD) and 614-682 (AANA…KIIH). Position 495 is a phosphothreonine (threonine 495). At serine 498 the chain carries Phosphoserine. Residues 510–519 (VEEETEENKE) show a composition bias toward acidic residues. Over residues 520-547 (DDSNNDKESTPDNDKESTIDIKISKNEN) the composition is skewed to basic and acidic residues. Over residues 614 to 646 (AANANPDMVPQNNPQQQQQQQQQQQQQQQQQQQ) the composition is skewed to low complexity. The span at 663–672 (ASDNKSSQQH) shows a compositional bias: polar residues.

Belongs to the protein kinase superfamily. Ser/Thr protein kinase family.

The protein resides in the cytoplasm. It catalyses the reaction L-seryl-[protein] + ATP = O-phospho-L-seryl-[protein] + ADP + H(+). The enzyme catalyses L-threonyl-[protein] + ATP = O-phospho-L-threonyl-[protein] + ADP + H(+). Its function is as follows. Involved in regulating the activity of the plasma membrane proton pump PMA1. In Saccharomyces cerevisiae (strain ATCC 204508 / S288c) (Baker's yeast), this protein is Serine/threonine-protein kinase HRK1 (HRK1).